Here is a 437-residue protein sequence, read N- to C-terminus: Sulfite reductase, dissimilatory-type subunit alpha (437 aa).

8 residues coordinate [4Fe-4S] cluster: cysteine 177, cysteine 183, cysteine 221, cysteine 225, cysteine 284, cysteine 303, cysteine 306, and cysteine 309. The 4Fe-4S ferredoxin-type domain occupies 294–322 (SKLSIDNKECVRCMHCINTMPRALHIGDE).

Heterohexamer of two alpha, two beta and two gamma subunits.

Its function is as follows. Part of the complex that catalyzes the reduction of sulfite to sulfide. The alpha and beta subunits may have arisen by gene duplication. They both bind 2 iron-sulfur clusters, but the alpha subunit seems to be catalytically inactive, due to substitutions along the putative substrate access channel, and because it binds sirohydrochlorin (the dematallated form of siroheme) instead of siroheme. This Nitratidesulfovibrio vulgaris (strain ATCC 29579 / DSM 644 / CCUG 34227 / NCIMB 8303 / VKM B-1760 / Hildenborough) (Desulfovibrio vulgaris) protein is Sulfite reductase, dissimilatory-type subunit alpha (dsvA).